The sequence spans 161 residues: uncharacterized protein (161 aa).

This is an uncharacterized protein from Mycoplasma (Bacteriophage L2).